A 134-amino-acid chain; its full sequence is ATP synthase epsilon chain (134 aa).

It belongs to the ATPase epsilon chain family. F-type ATPases have 2 components, CF(1) - the catalytic core - and CF(0) - the membrane proton channel. CF(1) has five subunits: alpha(3), beta(3), gamma(1), delta(1), epsilon(1). CF(0) has three main subunits: a, b and c.

It localises to the cellular thylakoid membrane. In terms of biological role, produces ATP from ADP in the presence of a proton gradient across the membrane. In Prochlorococcus marinus (strain MIT 9215), this protein is ATP synthase epsilon chain.